We begin with the raw amino-acid sequence, 516 residues long: Lipid II flippase MurJ (516 aa).

11 helical membrane passes run 93–113, 133–153, 159–179, 188–208, 233–253, 275–295, 317–337, 358–378, 390–409, 448–468, and 483–503; these read WALAVLSVVGIAGASWVVFAV, IMFPYIVFISLTTLASGVLNT, LPAFAPVLLNVAFIAAAVFVA, ALAWAVIVGGVLQFLVQLPGL, VLAKMVPATFAVSVAQLSLII, LMEFPTALLGVALGTILLPSL, VTFLLAAPSALALFFFATPLT, LATYGIGLVGIILIKILAPGF, IAIGVLIVTQLSNYVFVPLI, FFVQLVGAALVLAGLMHWCAI, and IALMAACLVLFAALYFGMLWV.

It belongs to the MurJ/MviN family.

It localises to the cell inner membrane. It participates in cell wall biogenesis; peptidoglycan biosynthesis. Its function is as follows. Involved in peptidoglycan biosynthesis. Transports lipid-linked peptidoglycan precursors from the inner to the outer leaflet of the cytoplasmic membrane. The sequence is that of Lipid II flippase MurJ from Burkholderia cenocepacia (strain ATCC BAA-245 / DSM 16553 / LMG 16656 / NCTC 13227 / J2315 / CF5610) (Burkholderia cepacia (strain J2315)).